A 401-amino-acid polypeptide reads, in one-letter code: Imidazolonepropionase (401 aa).

Histidine 66 and histidine 68 together coordinate Fe(3+). The Zn(2+) site is built by histidine 66 and histidine 68. 4-imidazolone-5-propanoate is bound by residues arginine 75, tyrosine 138, and histidine 171. Residue tyrosine 138 coordinates N-formimidoyl-L-glutamate. Fe(3+) is bound at residue histidine 236. Residue histidine 236 participates in Zn(2+) binding. Residue glutamine 239 coordinates 4-imidazolone-5-propanoate. A Fe(3+)-binding site is contributed by aspartate 311. Aspartate 311 provides a ligand contact to Zn(2+). N-formimidoyl-L-glutamate contacts are provided by asparagine 313 and glycine 315. A 4-imidazolone-5-propanoate-binding site is contributed by threonine 316.

This sequence belongs to the metallo-dependent hydrolases superfamily. HutI family. Zn(2+) is required as a cofactor. The cofactor is Fe(3+).

The protein localises to the cytoplasm. It carries out the reaction 4-imidazolone-5-propanoate + H2O = N-formimidoyl-L-glutamate. Its pathway is amino-acid degradation; L-histidine degradation into L-glutamate; N-formimidoyl-L-glutamate from L-histidine: step 3/3. Functionally, catalyzes the hydrolytic cleavage of the carbon-nitrogen bond in imidazolone-5-propanoate to yield N-formimidoyl-L-glutamate. It is the third step in the universal histidine degradation pathway. This chain is Imidazolonepropionase, found in Pseudomonas fluorescens (strain Pf0-1).